A 274-amino-acid polypeptide reads, in one-letter code: Thiamine kinase (274 aa).

It belongs to the thiamine kinase family.

It carries out the reaction thiamine + ATP = thiamine phosphate + ADP + H(+). It participates in cofactor biosynthesis; thiamine diphosphate biosynthesis; thiamine phosphate from thiamine: step 1/1. Functionally, catalyzes the ATP-dependent phosphorylation of thiamine to thiamine phosphate. Is involved in thiamine salvage. This is Thiamine kinase from Salmonella newport (strain SL254).